The sequence spans 290 residues: Xyloglucan endotransglycosylase/hydrolase protein 8 (290 aa).

Residues 1–25 (MAKHLALSVAAAVAVSWLAASSAAA) form the signal peptide. One can recognise a GH16 domain in the interval 26–218 (AGFYEKFDVV…WSGAPFVVSY (193 aa)). Glu-106 acts as the Nucleophile in catalysis. Glu-110 serves as the catalytic Proton donor. Residue Glu-110 coordinates xyloglucan. An N-linked (GlcNAc...) asparagine glycan is attached at Asn-114. Residues 123 to 125 (NTN), 133 to 135 (KKE), and 197 to 198 (YW) contribute to the xyloglucan site. 2 disulfide bridges follow: Cys-226–Cys-240 and Cys-273–Cys-287. A xyloglucan-binding site is contributed by Arg-278.

Belongs to the glycosyl hydrolase 16 family. XTH group 2 subfamily. Post-translationally, contains at least one intrachain disulfide bond essential for its enzymatic activity. As to expression, transcript strongly detected in leaf sheaths. Weakly or not expressed in leaf blades, roots and calli. Accumulation of transcript detected in shoot apex meristem, vascular tissues, young leaves, vascular bundles of leaf sheaths, and peripheral cylinder of the vascular bundles and fibers in the nodal region.

It localises to the secreted. The protein resides in the cell wall. Its subcellular location is the extracellular space. The protein localises to the apoplast. It carries out the reaction breaks a beta-(1-&gt;4) bond in the backbone of a xyloglucan and transfers the xyloglucanyl segment on to O-4 of the non-reducing terminal glucose residue of an acceptor, which can be a xyloglucan or an oligosaccharide of xyloglucan.. In terms of biological role, catalyzes xyloglucan endohydrolysis (XEH) and/or endotransglycosylation (XET). Cleaves and religates xyloglucan polymers, an essential constituent of the primary cell wall, and thereby participates in cell wall construction of growing tissues. May promote elongation of three internodes (II, III and IV) and may be involved in cell elongation processes. The chain is Xyloglucan endotransglycosylase/hydrolase protein 8 (XTH8) from Oryza sativa subsp. japonica (Rice).